The primary structure comprises 534 residues: MKQEGSARRRGADKAKPPPGGGEQEPPPPPAPQDVEMKEEAATGGGSTGEADGKTAAAAAEHSQRELDTVTLEDIKEHVKQLEKAVSGKEPRFVLRALRMLPSTSRRLNHYVLYKAVQGFFTSNNATRDFLLPFLEEPMDTEADLQFRPRTGKAASTPLLPEVEAYLQLLVVIFMMNSKRYKEAQKISDDLMQKISTQNRRALDLVAAKCYYYHARVYEFLDKLDVVRSFLHARLRTATLRHDADGQATLLNLLLRNYLHYSLYDQAEKLVSKSVFPEQANNNEWARYLYYTGRIKAIQLEYSEARRTMTNALRKAPQHTAVGFKQTVHKLLIVVELLLGEIPDRLQFRQPSLKRSLMPYFLLTQAVRTGNLAKFNQVLDQFGEKFQADGTYTLIIRLRHNVIKTGVRMISLSYSRISLADIAQKLQLDSPEDAEFIVAKAIRDGVIEASINHEKGYVQSKEMIDIYSTREPQLAFHQRISFCLDIHNMSVKAMRFPPKSYNKDLESAEERREREQQDLEFAKEMAEDDDDSFP.

Positions 1 to 16 (MKQEGSARRRGADKAK) are enriched in basic and acidic residues. The tract at residues 1–69 (MKQEGSARRR…AEHSQRELDT (69 aa)) is disordered. Pro residues predominate over residues 17 to 32 (PPPGGGEQEPPPPPAP). Residue lysine 38 forms a Glycyl lysine isopeptide (Lys-Gly) (interchain with G-Cter in SUMO1); alternate linkage. A Glycyl lysine isopeptide (Lys-Gly) (interchain with G-Cter in SUMO2); alternate cross-link involves residue lysine 38. Residues 286–465 (ARYLYYTGRI…GYVQSKEMID (180 aa)) form the PCI domain. 2 positions are modified to phosphoserine: serine 418 and serine 430. The tract at residues 500–534 (SYNKDLESAEERREREQQDLEFAKEMAEDDDDSFP) is disordered. Residues 501-525 (YNKDLESAEERREREQQDLEFAKEM) are compositionally biased toward basic and acidic residues.

The protein belongs to the proteasome subunit S3 family. Component of the 19S proteasome regulatory particle complex. The 26S proteasome consists of a 20S core particle (CP) and two 19S regulatory subunits (RP). The regulatory particle is made of a lid composed of 9 subunits including PSMD3, a base containing 6 ATPases and few additional components. Interacts with UBQLN1 (via ubiquitin-like domain). Interacts with ERCC6.

Its function is as follows. Component of the 26S proteasome, a multiprotein complex involved in the ATP-dependent degradation of ubiquitinated proteins. This complex plays a key role in the maintenance of protein homeostasis by removing misfolded or damaged proteins, which could impair cellular functions, and by removing proteins whose functions are no longer required. Therefore, the proteasome participates in numerous cellular processes, including cell cycle progression, apoptosis, or DNA damage repair. The sequence is that of 26S proteasome non-ATPase regulatory subunit 3 (PSMD3) from Homo sapiens (Human).